Reading from the N-terminus, the 279-residue chain is Thymidylate synthase (279 aa).

Residue 133–134 coordinates dUMP; the sequence is RR. C154 (nucleophile) is an active-site residue. DUMP-binding positions include 178–181, N189, and 219–221; these read RSND and HIY. D181 contacts (6R)-5,10-methylene-5,6,7,8-tetrahydrofolate. A278 is a (6R)-5,10-methylene-5,6,7,8-tetrahydrofolate binding site.

It belongs to the thymidylate synthase family. Bacterial-type ThyA subfamily. In terms of assembly, homodimer.

It localises to the cytoplasm. The enzyme catalyses dUMP + (6R)-5,10-methylene-5,6,7,8-tetrahydrofolate = 7,8-dihydrofolate + dTMP. Its pathway is pyrimidine metabolism; dTTP biosynthesis. In terms of biological role, catalyzes the reductive methylation of 2'-deoxyuridine-5'-monophosphate (dUMP) to 2'-deoxythymidine-5'-monophosphate (dTMP) while utilizing 5,10-methylenetetrahydrofolate (mTHF) as the methyl donor and reductant in the reaction, yielding dihydrofolate (DHF) as a by-product. This enzymatic reaction provides an intracellular de novo source of dTMP, an essential precursor for DNA biosynthesis. This chain is Thymidylate synthase, found in Streptococcus suis (strain 05ZYH33).